Here is a 1033-residue protein sequence, read N- to C-terminus: SIT4-associating protein SAP190 (1033 aa).

Disordered regions lie at residues 32 to 82 (DQDD…TTES), 147 to 213 (PEII…QVET), 768 to 813 (FGND…HDSG), and 828 to 1033 (ENEE…KEAF). Residues 158–170 (ILIERDRKDKKED) are compositionally biased toward basic and acidic residues. Residues 171–182 (AEEGGDSEETTN) show a composition bias toward acidic residues. Positions 183 to 195 (DSDHDSGDERSVD) are enriched in basic and acidic residues. Ser-774 carries the post-translational modification Phosphoserine. Acidic residues-rich tracts occupy residues 784-793 (SEDIIGDTEG) and 828-838 (ENEEDYAEYSD). Ser-857, Ser-862, and Ser-892 each carry phosphoserine. Over residues 858–879 (DDGKSKSAESEFTDKISEHRDG) the composition is skewed to basic and acidic residues. Polar residues predominate over residues 909–924 (SRSQPSDPKLQDQNIF). Residues 932 to 944 (GVGDDDDYMDPND) show a composition bias toward acidic residues. Thr-990 bears the Phosphothreonine mark. Position 991 is a phosphoserine (Ser-991). Residues 1000–1018 (ISSDEEDSEDEDEENDMGN) are compositionally biased toward acidic residues.

The protein belongs to the SAPS family. As to quaternary structure, associates with the SIT4 protein phosphatase catalytic subunit in a cell-cycle-dependent manner. Hyperphosphorylated in the absence of SIT4.

The protein resides in the cytoplasm. In terms of biological role, positive regulator of protein phosphatase SIT4. Involved in the general amino acid control (GAAC) response regulated by TOR. Involved in the dephosphorylation of the elongator complex subunit IKI3. The polypeptide is SIT4-associating protein SAP190 (SAP190) (Saccharomyces cerevisiae (strain Lalvin EC1118 / Prise de mousse) (Baker's yeast)).